A 2000-amino-acid chain; its full sequence is Myosin-14 (2000 aa).

N-acetylalanine is present on A2. T33 carries the phosphothreonine modification. The 51-residue stretch at 47-97 (TARRMVWVPSELHGFEAAALRDEGEEEAEVELAESGRRLRLPRDQIQRMNP) folds into the Myosin N-terminal SH3-like domain. S56 is subject to Phosphoserine. The region spanning 101–804 (SKAEDMAELT…VLAQLEEERD (704 aa)) is the Myosin motor domain. 194 to 201 (GESGAGKT) is an ATP binding site. Positions 682–704 (LSRLMATLSNTNPSFVRCIVPNH) are actin-binding. The region spanning 807-836 (VTDIIVSFQAAARGYLARRAFQRRQQQQSA) is the IQ domain. Residues 866–1951 (LQVTRQDEVL…VTTLRNRLRR (1086 aa)) are a coiled coil. S925 is subject to Phosphoserine. The tract at residues 1173–1197 (RGELEDTLDSTNAQQELRSKREQEV) is disordered. T1198 is subject to Phosphothreonine. 2 positions are modified to phosphoserine: S1249 and S1280. Disordered stretches follow at residues 1260 to 1311 (ELSS…AELE), 1597 to 1629 (HERD…RDEE), 1720 to 1751 (SDRA…TLEE), 1910 to 1942 (AEEE…NREV), and 1967 to 2000 (LEEG…ATPQ). Positions 1290–1304 (SDSERARSEAAEKLQ) are enriched in basic and acidic residues. The segment covering 1720-1732 (SDRARRQAQQDRD) has biased composition (basic and acidic residues). The segment covering 1971–1980 (VASDEEEAEG) has biased composition (acidic residues). S1973 and S1985 each carry phosphoserine. A compositionally biased stretch (low complexity) spans 1981-1991 (AEPGSAPGQEP). T1998 bears the Phosphothreonine mark.

The protein belongs to the TRAFAC class myosin-kinesin ATPase superfamily. Myosin family. As to quaternary structure, myosin is a hexameric protein that consists of 2 heavy chain subunits (MHC), 2 alkali light chain subunits (MLC) and 2 regulatory light chain subunits (MLC-2). Highest levels in lung, kidney, brain and colon, very low levels in liver and bladder and no expression in spleen or seminal vesicle (at protein level). Isoform 1 is expressed in liver, kidney and testis with low levels in skeletal muscle and heart. Isoform 1 and isoform 2 are expressed in brain and lung. Isoform 2 is the main isoform expressed in skeletal muscle and heart. Isoform 3 is limited to brain stem, cerebellum and spinal cord.

Functionally, cellular myosin that appears to play a role in cytokinesis, cell shape, and specialized functions such as secretion and capping. The protein is Myosin-14 (Myh14) of Mus musculus (Mouse).